The sequence spans 363 residues: Phosphoserine aminotransferase (363 aa).

Arg41 is a binding site for L-glutamate. Residues 75–76 (AS), Trp100, Thr155, Asp175, and Gln198 contribute to the pyridoxal 5'-phosphate site. Position 199 is an N6-(pyridoxal phosphate)lysine (Lys199). Pyridoxal 5'-phosphate is bound at residue 239 to 240 (NT).

This sequence belongs to the class-V pyridoxal-phosphate-dependent aminotransferase family. SerC subfamily. In terms of assembly, homodimer. The cofactor is pyridoxal 5'-phosphate.

The protein resides in the cytoplasm. It carries out the reaction O-phospho-L-serine + 2-oxoglutarate = 3-phosphooxypyruvate + L-glutamate. The enzyme catalyses 4-(phosphooxy)-L-threonine + 2-oxoglutarate = (R)-3-hydroxy-2-oxo-4-phosphooxybutanoate + L-glutamate. It participates in amino-acid biosynthesis; L-serine biosynthesis; L-serine from 3-phospho-D-glycerate: step 2/3. Catalyzes the reversible conversion of 3-phosphohydroxypyruvate to phosphoserine and of 3-hydroxy-2-oxo-4-phosphonooxybutanoate to phosphohydroxythreonine. The chain is Phosphoserine aminotransferase from Streptococcus agalactiae serotype III (strain NEM316).